Reading from the N-terminus, the 387-residue chain is MNIKLPTFIELYRQLIATPSISATDAKTDQSNEALINLLANWLETLGFSIEIQPVPETRGKFNLLATLGSGTGGLLLCGHTDTVPFDEGRWTQDPFTLTEKEGKLYGLGTADMKGFFAFIIDALRDIDTSQLTHPLYILATADEETSMAGARYFAANTAIRPDFAIIGEPTSLQPIRAHKGHLSNAIRITGQSGHSSDPEKGVNAIELMHESITHLSTLRDRLKTRYNNPAFVIPYPTMNFGYINGGDAANRICACCELHMDIRPLPGLTLQDLDDLLHETLAPVKARWPGRLSVEALHEPIPGYECPTDHKMVAVIEKLLGEKAQTVNYCTEAPFIQALCPTLVLGPGSIEQAHQPDEFIDMAFIEPTRELMGQLIENFCLAEKAK.

His-80 provides a ligand contact to Zn(2+). Residue Asp-82 is part of the active site. Asp-112 provides a ligand contact to Zn(2+). The active site involves Glu-144. The Zn(2+) site is built by Glu-145, Glu-169, and His-355.

It belongs to the peptidase M20A family. ArgE subfamily. In terms of assembly, homodimer. Zn(2+) is required as a cofactor. The cofactor is Co(2+). Glutathione serves as cofactor.

It localises to the cytoplasm. The catalysed reaction is N(2)-acetyl-L-ornithine + H2O = L-ornithine + acetate. It functions in the pathway amino-acid biosynthesis; L-arginine biosynthesis; L-ornithine from N(2)-acetyl-L-ornithine (linear): step 1/1. Functionally, catalyzes the hydrolysis of the amide bond of N(2)-acetylated L-amino acids. Cleaves the acetyl group from N-acetyl-L-ornithine to form L-ornithine, an intermediate in L-arginine biosynthesis pathway, and a branchpoint in the synthesis of polyamines. This chain is Acetylornithine deacetylase, found in Proteus mirabilis (strain HI4320).